The chain runs to 511 residues: Glucans biosynthesis protein G (511 aa).

A signal peptide spans 1-22 (MMKMRWLSAAVMLTLYTSSSWA).

Belongs to the OpgD/OpgG family.

It is found in the periplasm. It functions in the pathway glycan metabolism; osmoregulated periplasmic glucan (OPG) biosynthesis. Its function is as follows. Involved in the biosynthesis of osmoregulated periplasmic glucans (OPGs). The polypeptide is Glucans biosynthesis protein G (Escherichia coli (strain K12 / MC4100 / BW2952)).